We begin with the raw amino-acid sequence, 590 residues long: MRRPSLALLALSSLPFGSARQPASFSIHQDLLAHPQFEVIFSDSYVFEADAFALLEAANKTPKPTPASDGAHDGSTTRTDLTSAIRESATANADTDNGDESIGGTSPLRETYELIAHPPMRYLCSIPIIAPPPALNKTATELAKAEEAREVTRAYNKGWELMRGLENQCLHFVSGWWSYQYCYGKSIVQYHAVPNPKGGPPLRDKNSQEYILGTSLPPSSHSQKGKQIEVPNNEQKQLSPPPNTELQAKDNQRYLVQRLDGGTICDLTGRPRTIEIQYHCNPALSGDRIGWIKEVTTCAYLMVIHTPRLCADVAFLPPKETKAHPITCRQIITSDEEALSFNQRRKNTIDSAAAAAAAVTTEDQKQGSESGSPEKLSYQGLTVAGIPIGARRILPSTHVLPLPRHLQQQRQEAQQGNLLEALTKAAFKADVFGDYGDDNNNNNNNHHPKAGKGRKAAGAGKGQSGQKEMKKMRISERDIDKLGLDQQTLDALREEIRAAGLDPDRNLNDEREAGGEIVWEFYADVSGDEDDGAVAEEGKEVFVWYEDEDEGGEPAEAGKDQKESKKGGNGEGSGSGSEEGSKEEYYRDEL.

The first 19 residues, 1 to 19 (MRRPSLALLALSSLPFGSA), serve as a signal peptide directing secretion. The segment at 83–106 (SAIRESATANADTDNGDESIGGTS) is disordered. Asn136 carries an N-linked (GlcNAc...) asparagine glycan. In terms of domain architecture, MRH spans 167–312 (NQCLHFVSGW…VIHTPRLCAD (146 aa)). A disulfide bond links Cys169 and Cys182. Positions 176, 177, and 189 each coordinate a mannooligosaccharide derivative. A disordered region spans residues 198-248 (GGPPLRDKNSQEYILGTSLPPSSHSQKGKQIEVPNNEQKQLSPPPNTELQA). Cystine bridges form between Cys265-Cys298 and Cys280-Cys310. A mannooligosaccharide derivative-binding residues include Asp266, Arg272, Glu294, and Tyr300. 3 disordered regions span residues 357-376 (AAVTTEDQKQGSESGSPEKL), 436-472 (GDDNNNNNNNHHPKAGKGRKAAGAGKGQSGQKEMKKM), and 545-590 (YEDE…RDEL). Positions 446–455 (HHPKAGKGRK) are enriched in basic residues. Basic and acidic residues-rich tracts occupy residues 556–568 (EAGKDQKESKKGG) and 579–590 (EGSKEEYYRDEL). The short motif at 587–590 (RDEL) is the Prevents secretion from ER element.

It belongs to the OS-9 family. As to quaternary structure, interacts with missfolded ER lumenal proteins.

It localises to the endoplasmic reticulum membrane. Lectin involved in the quality control of the secretory pathway. As a member of the endoplasmic reticulum-associated degradation lumenal (ERAD-L) surveillance system, targets misfolded endoplasmic reticulum lumenal glycoproteins for degradation. The chain is Protein OS-9 homolog (yos-9) from Neurospora crassa (strain ATCC 24698 / 74-OR23-1A / CBS 708.71 / DSM 1257 / FGSC 987).